Reading from the N-terminus, the 711-residue chain is Ribosomal RNA large subunit methyltransferase K/L (711 aa).

Residues 42-153 enclose the THUMP domain; sequence DAQRAVLWSR…KGRATISVDL (112 aa).

It belongs to the methyltransferase superfamily. RlmKL family.

The protein localises to the cytoplasm. The enzyme catalyses guanosine(2445) in 23S rRNA + S-adenosyl-L-methionine = N(2)-methylguanosine(2445) in 23S rRNA + S-adenosyl-L-homocysteine + H(+). It carries out the reaction guanosine(2069) in 23S rRNA + S-adenosyl-L-methionine = N(2)-methylguanosine(2069) in 23S rRNA + S-adenosyl-L-homocysteine + H(+). Specifically methylates the guanine in position 2445 (m2G2445) and the guanine in position 2069 (m7G2069) of 23S rRNA. This is Ribosomal RNA large subunit methyltransferase K/L from Xanthomonas campestris pv. campestris (strain B100).